The chain runs to 163 residues: MSIEMTVSEIAEVLGLSRQAINNRVKELPEEDTDKNDKGVTVVTRSGLIKLEEIYKKTIFEDEPVSEDVKQRELMEILVDEKNAEILRLYEQLKAKDRQLSEKDEQMRIKDRQIAEKDKQLDQQQQLTLQAMKDQENLKLELDQAKEEVQSTKKGFFARLFGG.

Interacts with CpsD and ParB.

It localises to the cytoplasm. The protein localises to the nucleoid. The protein resides in the cell membrane. Its function is as follows. Required for cell division and chromosome segregation. Binds to DNA and is involved in segregating the origin of replication (oriC) region to new daughter cells. When the nucleoid is not properly segregated, involved in blocking the cell division to protect the nucleoid against premature truncation by the newly forming septum, a function which is dependent on CpsD and its autophosphorylation level. This is Regulator of chromosome segregation from Streptococcus pneumoniae serotype 2 (strain D39 / NCTC 7466).